A 150-amino-acid chain; its full sequence is 3-dehydroquinate dehydratase (150 aa).

Tyr-26 functions as the Proton acceptor in the catalytic mechanism. Positions 77, 83, and 90 each coordinate substrate. Catalysis depends on His-103, which acts as the Proton donor. Substrate-binding positions include 104 to 105 and Arg-114; that span reads LS.

The protein belongs to the type-II 3-dehydroquinase family. Homododecamer.

It catalyses the reaction 3-dehydroquinate = 3-dehydroshikimate + H2O. It participates in metabolic intermediate biosynthesis; chorismate biosynthesis; chorismate from D-erythrose 4-phosphate and phosphoenolpyruvate: step 3/7. In terms of biological role, catalyzes a trans-dehydration via an enolate intermediate. The protein is 3-dehydroquinate dehydratase of Klebsiella pneumoniae (strain 342).